The following is a 271-amino-acid chain: Formamidopyrimidine-DNA glycosylase (271 aa).

Proline 2 serves as the catalytic Schiff-base intermediate with DNA. The Proton donor role is filled by glutamate 3. The active-site Proton donor; for beta-elimination activity is the lysine 57. Residues histidine 90, arginine 109, and lysine 151 each contribute to the DNA site. An FPG-type zinc finger spans residues 236 to 270; that stretch reads HVYGRGGKTCTQCGHMLSEIKLGQRATVFCSLCQQ. The active-site Proton donor; for delta-elimination activity is the arginine 260.

This sequence belongs to the FPG family. Monomer. The cofactor is Zn(2+).

It catalyses the reaction Hydrolysis of DNA containing ring-opened 7-methylguanine residues, releasing 2,6-diamino-4-hydroxy-5-(N-methyl)formamidopyrimidine.. It carries out the reaction 2'-deoxyribonucleotide-(2'-deoxyribose 5'-phosphate)-2'-deoxyribonucleotide-DNA = a 3'-end 2'-deoxyribonucleotide-(2,3-dehydro-2,3-deoxyribose 5'-phosphate)-DNA + a 5'-end 5'-phospho-2'-deoxyribonucleoside-DNA + H(+). Functionally, involved in base excision repair of DNA damaged by oxidation or by mutagenic agents. Acts as a DNA glycosylase that recognizes and removes damaged bases. Has a preference for oxidized purines, such as 7,8-dihydro-8-oxoguanine (8-oxoG). Has AP (apurinic/apyrimidinic) lyase activity and introduces nicks in the DNA strand. Cleaves the DNA backbone by beta-delta elimination to generate a single-strand break at the site of the removed base with both 3'- and 5'-phosphates. This Shewanella pealeana (strain ATCC 700345 / ANG-SQ1) protein is Formamidopyrimidine-DNA glycosylase.